Reading from the N-terminus, the 405-residue chain is Acetate kinase (405 aa).

Asn-7 contacts Mg(2+). Lys-14 provides a ligand contact to ATP. Substrate is bound at residue Arg-90. Asp-147 (proton donor/acceptor) is an active-site residue. ATP is bound by residues His-207–Gly-211, Asp-282–Arg-284, and Gly-331–Asn-335. A Mg(2+)-binding site is contributed by Glu-384.

This sequence belongs to the acetokinase family. In terms of assembly, homodimer. Mg(2+) is required as a cofactor. The cofactor is Mn(2+).

The protein resides in the cytoplasm. It catalyses the reaction acetate + ATP = acetyl phosphate + ADP. It participates in metabolic intermediate biosynthesis; acetyl-CoA biosynthesis; acetyl-CoA from acetate: step 1/2. In terms of biological role, catalyzes the formation of acetyl phosphate from acetate and ATP. Can also catalyze the reverse reaction. This Clostridium kluyveri (strain ATCC 8527 / DSM 555 / NBRC 12016 / NCIMB 10680 / K1) protein is Acetate kinase.